Consider the following 469-residue polypeptide: 3-isopropylmalate dehydratase large subunit (469 aa).

The [4Fe-4S] cluster site is built by Cys347, Cys410, and Cys413.

This sequence belongs to the aconitase/IPM isomerase family. LeuC type 1 subfamily. Heterodimer of LeuC and LeuD. Requires [4Fe-4S] cluster as cofactor.

It catalyses the reaction (2R,3S)-3-isopropylmalate = (2S)-2-isopropylmalate. It participates in amino-acid biosynthesis; L-leucine biosynthesis; L-leucine from 3-methyl-2-oxobutanoate: step 2/4. Its function is as follows. Catalyzes the isomerization between 2-isopropylmalate and 3-isopropylmalate, via the formation of 2-isopropylmaleate. In Burkholderia orbicola (strain MC0-3), this protein is 3-isopropylmalate dehydratase large subunit.